A 273-amino-acid polypeptide reads, in one-letter code: MTRIIDVSLFCFFLFSLGAMSQPSQNLTDCNQFPDTYQSNRNTVLSTLRNHSSLGSYYFNATAGLSPNTVYGMFLCIGNISKTSCSNCVHSATLEMDKSCESHDTSFMFSDECMVRYSDNSFFSLVEDSPATFSYSQNDSLSYPQFYNQTLPGKLDELILKAPSSFSSPVPYFVEDKEHVTQVEGSYDLEAMAQCSPDLDPSSCTVCLGLVVEKFSECCSQSRWARIHFPKCLLRYDISALQPNLTSLGVTTKGDDIFGRTFIAIMIGLLMGL.

The signal sequence occupies residues 1-21 (MTRIIDVSLFCFFLFSLGAMS). Gnk2-homologous domains lie at 22-122 (QPSQ…DNSF) and 128-241 (DSPA…ISAL).

It belongs to the cysteine-rich repeat secretory protein family.

The protein localises to the secreted. The chain is Probable cysteine-rich repeat secretory protein 6 (CRRSP6) from Arabidopsis thaliana (Mouse-ear cress).